The primary structure comprises 259 residues: Global transcriptional regulator CodY (259 aa).

Residues 1 to 155 form a GAF domain region; that stretch reads MTLLEKTRKI…GGTVVGMEIL (155 aa). A DNA-binding region (H-T-H motif) is located at residues 203 to 222; it reads ASKIADRVGITRSVIVNALR.

Belongs to the CodY family.

It is found in the cytoplasm. Its function is as follows. DNA-binding global transcriptional regulator which is involved in the adaptive response to starvation and acts by directly or indirectly controlling the expression of numerous genes in response to nutrient availability. During rapid exponential growth, CodY is highly active and represses genes whose products allow adaptation to nutrient depletion. The polypeptide is Global transcriptional regulator CodY (Listeria monocytogenes serotype 4b (strain CLIP80459)).